The chain runs to 246 residues: Exosome complex component Rrp41 (246 aa).

The protein belongs to the RNase PH family. Rrp41 subfamily. In terms of assembly, component of the archaeal exosome complex. Forms a hexameric ring-like arrangement composed of 3 Rrp41-Rrp42 heterodimers. The hexameric ring associates with a trimer of Rrp4 and/or Csl4 subunits.

It is found in the cytoplasm. In terms of biological role, catalytic component of the exosome, which is a complex involved in RNA degradation. Has 3'-&gt;5' exoribonuclease activity. Can also synthesize heteromeric RNA-tails. This Pyrobaculum neutrophilum (strain DSM 2338 / JCM 9278 / NBRC 100436 / V24Sta) (Thermoproteus neutrophilus) protein is Exosome complex component Rrp41.